We begin with the raw amino-acid sequence, 345 residues long: Mannonate dehydratase 2 (345 aa).

Belongs to the mannonate dehydratase family. Fe(2+) is required as a cofactor. The cofactor is Mn(2+).

The catalysed reaction is D-mannonate = 2-dehydro-3-deoxy-D-gluconate + H2O. It participates in carbohydrate metabolism; pentose and glucuronate interconversion. In terms of biological role, catalyzes the dehydration of D-mannonate. This Halalkalibacterium halodurans (strain ATCC BAA-125 / DSM 18197 / FERM 7344 / JCM 9153 / C-125) (Bacillus halodurans) protein is Mannonate dehydratase 2 (uxuA2).